Reading from the N-terminus, the 134-residue chain is Insulin-like peptide 4 (134 aa).

The first 26 residues, 1–26, serve as a signal peptide directing secretion; the sequence is MSLIRLGLALLLLLATVSQLLQPVQG. Intrachain disulfides connect cysteine 31–cysteine 120, cysteine 43–cysteine 133, and cysteine 119–cysteine 124. The propeptide at 54-108 is connecting peptide; it reads SSASKDARVRDLIRKLQQPDEDIEQETETGRLKQKHTDADTEKGVPPAVGSGRKL. Positions 72-107 are disordered; the sequence is PDEDIEQETETGRLKQKHTDADTEKGVPPAVGSGRK. A compositionally biased stretch (basic and acidic residues) spans 81-96; the sequence is ETGRLKQKHTDADTEK.

This sequence belongs to the insulin family. Heterodimer of a B chain and an A chain linked by two disulfide bonds. Expressed at a high level in the embryonic mesoderm, with expression continuing after gastrulation and reducing from stage 12 onwards. Highly expressed in the embryonic anterior midgut rudiment and larval midgut.

It is found in the secreted. Functionally, possible ligand of InR/insulin-like receptor. In Drosophila melanogaster (Fruit fly), this protein is Insulin-like peptide 4.